We begin with the raw amino-acid sequence, 113 residues long: Endoribonuclease SymE (113 aa).

Positions 29-74 constitute a SpoVT-AbrB domain; sequence SRYPDYSRIPAITLKGQWLEAAGFATGTVVDVKVMEGCIVLTAQPP.

It belongs to the SymE family.

It localises to the cytoplasm. Involved in the degradation and recycling of damaged RNA. It is itself a target for degradation by the ATP-dependent protease Lon. In Escherichia coli (strain 55989 / EAEC), this protein is Endoribonuclease SymE.